Consider the following 147-residue polypeptide: Hemoglobin subunit gamma (147 aa).

Positions Asn-3–His-147 constitute a Globin domain. Heme b-binding residues include His-64 and His-93.

This sequence belongs to the globin family. Heterotetramer of two alpha chains and two gamma chains in fetal hemoglobin (Hb F). In terms of tissue distribution, red blood cells.

In terms of biological role, gamma chains make up the fetal hemoglobin F, in combination with alpha chains. The polypeptide is Hemoglobin subunit gamma (HBG) (Lagothrix lagotricha (Brown woolly monkey)).